The following is a 360-amino-acid chain: uncharacterized protein (360 aa).

An ABC transporter domain is found at 4–235 (LSLQHIQKIY…PANMFVAGFI (232 aa)). 37–44 (GPSGCGKS) lines the ATP pocket.

This sequence belongs to the ABC transporter superfamily.

This is an uncharacterized protein from Escherichia coli O157:H7.